We begin with the raw amino-acid sequence, 939 residues long: Intimin (939 aa).

An N-terminal signal peptide occupies residues Met-1–Gly-41. The segment at Asn-40 to Thr-153 is peptidoglycan-binding. A sufficient for homodimerization region spans residues Asn-40–Thr-153. Positions Asn-40–Thr-212 are required for periplasmic localization. A LysM domain is found at Leu-63–Leu-112. The tract at residues Asp-189–Leu-430 is inverse autotransporter. Positions Leu-402–Phe-411 are signature sequence for beta-barrel assembly machinery (BAM), which recognizes the unfolded beta-barrel in the periplasm. 2 Big-1 domains span residues Val-560–Val-653 and Ile-660–Phe-751. Positions Phe-750–Lys-939 are required and sufficient for interaction with intimin receptor Tir. The interval Leu-842 to Lys-939 is C-type lectin domain. Residues Leu-842 to Lys-939 form an intimin receptor Tir-binding region. Cys-860 and Cys-937 are disulfide-bonded.

It belongs to the intimin/invasin family. As to quaternary structure, homodimer. Interacts with Tir.

The protein localises to the cell outer membrane. Its function is as follows. An inverse autotransporter. Adhesin, which mediates attachment to the human intestine epithelial cells. Necessary for the production of attaching and effacing lesions on infected human tissue culture cells. Anchored to the outer membrane by binding to peptidoglycan (PGN) via its periplasmic domain, thus helping in receptor interactions during host invasion. PGN-binding may also aid in resisting mechanical and chemical stress during transit of the bacterium through the gastrointestinal tract of the host. Periplasmic domain binds purified E.coli PGN sacculi under acidic conditions in vitro and in vivo, but does not bind to chitin. Periplasmic domain binds PGN sacculi with an apparent dissociation constant (Kd) of 0.8 uM. No binding to PGN in vitro at normal physiological pH 7.4. In Escherichia coli O127:H6 (strain E2348/69 / EPEC), this protein is Intimin.